A 256-amino-acid chain; its full sequence is Nuclear shuttle protein (256 aa).

A Bipartite nuclear localization signal motif is present at residues 18–39 (NITNRYPIKRKYVAGHTRPCVR). The short motif at 81-96 (SRGPSGDGRSRDYIKL) is the Nuclear localization signal element. The interaction with Arabidopsis thaliana NSI protein stretch occupies residues 150 to 187 (ELFGPYSACYVNLRLLNNQQHRYRVLHSVKRFVSSSGD).

Belongs to the begomovirus nuclear shuttle protein family. Binds to single-stranded and double-stranded viral DNA. Interacts with the host nuclear shuttle interacting (NSI) protein. This interaction may allow NSP to recruit NSI monomers to the viral genome and thus regulate nuclear export of viral genome by NSP.

It localises to the host nucleus. The protein localises to the host cytoplasm. Its subcellular location is the host cell membrane. Its function is as follows. Binds to the genomic viral ssDNA, shuttles it into and out of the cell nucleus. Begomoviruses use 2 proteins to transport their DNA from cell to cell. The nuclear shuttle protein (NSP) shuttles it between nucleus and cytoplasm and the movement protein (MP) probably transports the DNA-NSP complex to the cell periphery and facilitates movement across the cell wall. This is Nuclear shuttle protein from Hewittia sublobata (Coralbush).